The following is a 517-amino-acid chain: 2,4,6-trichlorophenol monooxygenase (517 aa).

This sequence belongs to the FADH(2)-utilizing monooxygenase family. As to quaternary structure, homotetramer in solution.

The enzyme catalyses 2,4,6-trichlorophenol + FADH2 + O2 = 2-chloro-6-hydroxy-1,4-benzoquinone + FAD + 2 chloride + 3 H(+). The catalysed reaction is 2,4,6-trichlorophenol + FADH2 + O2 = 2,6-dichlorobenzoquinone + FAD + chloride + H2O + H(+). It carries out the reaction 2,6-dichlorobenzoquinone + H2O = 2-chloro-6-hydroxy-1,4-benzoquinone + chloride + 2 H(+). It functions in the pathway aromatic compound metabolism. The protein operates within xenobiotic degradation. Involved in the degradation of 2,4,6-trichlorophenol (2,4,6-TCP). Catalyzes the conversion of 2,4,6-TCP to 6-chlorohydroxyquinol (6-CHQ). The monooxygenase oxidizes 2,4,6-TCP to 2,6-dichloroquinone (2,6-DCBQ), which remains with the enzyme and is hydrolyzed to 2-chlorohydroxyquinone. 2-chlorohydroxyquinone is chemically reduced by ascorbate and NADH to 6-chlorohydroxyquinol (6-CHQ). The protein is 2,4,6-trichlorophenol monooxygenase of Cupriavidus pinatubonensis (strain JMP 134 / LMG 1197) (Cupriavidus necator (strain JMP 134)).